A 502-amino-acid polypeptide reads, in one-letter code: T-complex protein 11-like X-linked protein 1 (502 aa).

A disordered region spans residues 1-36 (MPKTEETVLQNDPSVAENGAPEPKTPGQSQKSKSFC).

Belongs to the TCP11 family.

The protein is T-complex protein 11-like X-linked protein 1 of Homo sapiens (Human).